A 61-amino-acid polypeptide reads, in one-letter code: Small ribosomal subunit protein uS14B (61 aa).

Zn(2+) is bound by residues Cys-24, Cys-27, Cys-40, and Cys-43.

Belongs to the universal ribosomal protein uS14 family. Zinc-binding uS14 subfamily. Part of the 30S ribosomal subunit. Contacts proteins S3 and S10. Zn(2+) is required as a cofactor.

Binds 16S rRNA, required for the assembly of 30S particles and may also be responsible for determining the conformation of the 16S rRNA at the A site. This chain is Small ribosomal subunit protein uS14B, found in Staphylococcus saprophyticus subsp. saprophyticus (strain ATCC 15305 / DSM 20229 / NCIMB 8711 / NCTC 7292 / S-41).